A 584-amino-acid polypeptide reads, in one-letter code: uncharacterized protein (584 aa).

The first 27 residues, methionine 1–serine 27, serve as a signal peptide directing secretion. Residue cysteine 28 is the site of N-palmitoyl cysteine attachment. Cysteine 28 carries S-diacylglycerol cysteine lipidation. The tract at residues asparagine 530–alanine 570 is disordered. The span at threonine 538–threonine 552 shows a compositional bias: low complexity. The segment covering aspartate 553–asparagine 565 has biased composition (basic and acidic residues).

It belongs to the MG067/MG068/MG395 family.

It is found in the cell membrane. This is an uncharacterized protein from Mycoplasmoides gallisepticum (strain R(low / passage 15 / clone 2)) (Mycoplasma gallisepticum).